A 1010-amino-acid polypeptide reads, in one-letter code: Phosphoenolpyruvate carboxylase (1010 aa).

A compositionally biased stretch (polar residues) spans 1–18 (MIMRSPETSGASMPQSTA). Disordered regions lie at residues 1–36 (MIMRSPETSGASMPQSTAHVPDGEQPRASGGSPGAG) and 132–154 (LRPSRSQDDETAAPFDPFAPPLA). Residues His-195 and Lys-652 contribute to the active site. The disordered stretch occupies residues 967–986 (QNRQPPMSESPGTPEDRRTY).

It belongs to the PEPCase type 1 family. Requires Mg(2+) as cofactor.

The enzyme catalyses oxaloacetate + phosphate = phosphoenolpyruvate + hydrogencarbonate. Forms oxaloacetate, a four-carbon dicarboxylic acid source for the tricarboxylic acid cycle. The sequence is that of Phosphoenolpyruvate carboxylase from Parasynechococcus marenigrum (strain WH8102).